Here is a 198-residue protein sequence, read N- to C-terminus: Phosphoheptose isomerase (198 aa).

One can recognise an SIS domain in the interval 34–196; that stretch reads IVEALIRGNK…DDSLFPADHG (163 aa). 49–51 contacts substrate; the sequence is NGG. Zn(2+) contacts are provided by H58 and N62. Substrate contacts are provided by residues N62, 91-92, 117-119, S122, and Q172; these read ND and STS. Positions 172 and 180 each coordinate Zn(2+).

The protein belongs to the SIS family. GmhA subfamily. In terms of assembly, homotetramer. Zn(2+) serves as cofactor.

The protein resides in the cytoplasm. The enzyme catalyses 2 D-sedoheptulose 7-phosphate = D-glycero-alpha-D-manno-heptose 7-phosphate + D-glycero-beta-D-manno-heptose 7-phosphate. It participates in carbohydrate biosynthesis; D-glycero-D-manno-heptose 7-phosphate biosynthesis; D-glycero-alpha-D-manno-heptose 7-phosphate and D-glycero-beta-D-manno-heptose 7-phosphate from sedoheptulose 7-phosphate: step 1/1. Catalyzes the isomerization of sedoheptulose 7-phosphate in D-glycero-D-manno-heptose 7-phosphate. The polypeptide is Phosphoheptose isomerase (Alteromonas mediterranea (strain DSM 17117 / CIP 110805 / LMG 28347 / Deep ecotype)).